The primary structure comprises 277 residues: Ribosomal RNA small subunit methyltransferase G (277 aa).

S-adenosyl-L-methionine is bound by residues glycine 128, phenylalanine 133, 188 to 189, and arginine 198; that span reads SE.

It belongs to the methyltransferase superfamily. RNA methyltransferase RsmG family.

Its subcellular location is the cytoplasm. The enzyme catalyses guanosine(527) in 16S rRNA + S-adenosyl-L-methionine = N(7)-methylguanosine(527) in 16S rRNA + S-adenosyl-L-homocysteine. Its function is as follows. Specifically methylates the N7 position of guanine in position 527 of 16S rRNA. The chain is Ribosomal RNA small subunit methyltransferase G from Nitrobacter winogradskyi (strain ATCC 25391 / DSM 10237 / CIP 104748 / NCIMB 11846 / Nb-255).